Reading from the N-terminus, the 195-residue chain is Capsid protein (195 aa).

The segment at 148–195 is disordered; that stretch reads NAPILSTLPETTVVRRRGRSPRRRTPSPRRRRSQSPRRRRSASPASQC. A compositionally biased stretch (basic residues) spans 161–188; it reads VRRRGRSPRRRTPSPRRRRSQSPRRRRS. 3 positions are modified to phosphoserine; by host: Ser167, Ser174, and Ser182. A 1; half-length repeat occupies 167–172; sequence SPRRRT. The 3 X 7 AA repeats of S-P-R-R-R-[PR]-S stretch occupies residues 167–188; that stretch reads SPRRRTPSPRRRRSQSPRRRRS. The short motif at 170–187 is the Bipartite nuclear localization signal element; the sequence is RRTPSPRRRRSQSPRRRR. Repeat copies occupy residues 174-180 and 182-188. Residues 189–195 are RNA binding; that stretch reads ASPASQC.

This sequence belongs to the orthohepadnavirus core antigen family. In terms of assembly, homodimerizes, then multimerizes. Interacts with cytosol exposed regions of viral L glycoprotein present in the reticulum-to-Golgi compartment. Interacts with human FLNB. Phosphorylated form interacts with host importin alpha; this interaction depends on the exposure of the NLS, which itself depends upon genome maturation and/or phosphorylation of the capsid protein. Interacts with host NUP153. Phosphorylated by host SRPK1, SRPK2, and maybe protein kinase C or GAPDH. Phosphorylation is critical for pregenomic RNA packaging. Protein kinase C phosphorylation is stimulated by HBx protein and may play a role in transport of the viral genome to the nucleus at the late step during the viral replication cycle.

The protein localises to the virion. It is found in the host cytoplasm. Functionally, self assembles to form an icosahedral capsid. Most capsids appear to be large particles with an icosahedral symmetry of T=4 and consist of 240 copies of capsid protein, though a fraction forms smaller T=3 particles consisting of 180 capsid proteins. Entering capsids are transported along microtubules to the nucleus. Phosphorylation of the capsid is thought to induce exposure of nuclear localization signal in the C-terminal portion of the capsid protein that allows binding to the nuclear pore complex via the importin (karyopherin-) alpha and beta. Capsids are imported in intact form through the nuclear pore into the nuclear basket, where it probably binds NUP153. Only capsids that contain the mature viral genome can release the viral DNA and capsid protein into the nucleoplasm. Immature capsids get stuck in the basket. Capsids encapsulate the pre-genomic RNA and the P protein. Pre-genomic RNA is reverse-transcribed into DNA while the capsid is still in the cytoplasm. The capsid can then either be directed to the nucleus, providing more genomes for transcription, or bud through the endoplasmic reticulum to provide new virions. This chain is Capsid protein, found in Hepatitis B virus genotype G (isolate United States/USG17/2002) (HBV-G).